Here is a 638-residue protein sequence, read N- to C-terminus: LIM domain kinase 2 (638 aa).

LIM zinc-binding domains are found at residues 12–63 (CRGC…CHKD) and 72–124 (CHGC…CGKC). One can recognise a PDZ domain in the interval 152–239 (LISMPATTEC…TLQLLIEHDP (88 aa)). A Phosphothreonine modification is found at Thr-210. Over residues 257-266 (MQSSGHTLML) the composition is skewed to polar residues. The disordered stretch occupies residues 257–304 (MQSSGHTLMLSTLDAKENQEGTLRRRSLRRSNSISKSPGPSSPKEPLL). Residues 270-279 (DAKENQEGTL) are compositionally biased toward basic and acidic residues. Positions 286–304 (RSNSISKSPGPSSPKEPLL) are enriched in low complexity. Phosphoserine occurs at positions 293 and 298. In terms of domain architecture, Protein kinase spans 331 to 608 (LIHGEVLGKG…DSFEALSLFL (278 aa)). Residues 337 to 345 (LGKGFFGQA) and Lys-360 contribute to the ATP site. Asp-451 is an active-site residue. Thr-505 carries the post-translational modification Phosphothreonine; by ROCK1 and CDC42BP.

Belongs to the protein kinase superfamily. TKL Ser/Thr protein kinase family. As to quaternary structure, binds ROCK1 and MARF1. Interacts with NISCH. Phosphorylated on serine and/or threonine residues by ROCK1. In terms of tissue distribution, found in various tissues at moderate levels, except for testis, which shows very low expression.

Its subcellular location is the cytoplasm. The protein resides in the nucleus. It localises to the perinuclear region. It is found in the cytoskeleton. The protein localises to the spindle. Its subcellular location is the microtubule organizing center. The protein resides in the centrosome. It catalyses the reaction L-seryl-[protein] + ATP = O-phospho-L-seryl-[protein] + ADP + H(+). The catalysed reaction is L-threonyl-[protein] + ATP = O-phospho-L-threonyl-[protein] + ADP + H(+). Serine/threonine-protein kinase that plays an essential role in the regulation of actin filament dynamics. Acts downstream of several Rho family GTPase signal transduction pathways. Involved in astral microtubule organization and mitotic spindle orientation during early stages of mitosis by mediating phosphorylation of TPPP. Displays serine/threonine-specific phosphorylation of myelin basic protein and histone (MBP) in vitro. Suppresses ciliogenesis via multiple pathways; phosphorylation of CFL1, directional trafficking of ciliary vesicles to the ciliary base, and by facilitating YAP1 nuclear localization where it acts as a transcriptional corepressor of the TEAD4 target genes AURKA and PLK1. The sequence is that of LIM domain kinase 2 (Limk2) from Rattus norvegicus (Rat).